The chain runs to 249 residues: Phosphate import ATP-binding protein PstB (249 aa).

An ABC transporter domain is found at 5 to 244 (LRIEDLHFWY…PEKDRTEAYV (240 aa)). 37–44 (GPSGCGKS) contributes to the ATP binding site.

This sequence belongs to the ABC transporter superfamily. Phosphate importer (TC 3.A.1.7) family. As to quaternary structure, the complex is composed of two ATP-binding proteins (PstB), two transmembrane proteins (PstC and PstA) and a solute-binding protein (PstS).

The protein resides in the cell inner membrane. The catalysed reaction is phosphate(out) + ATP + H2O = ADP + 2 phosphate(in) + H(+). In terms of biological role, part of the ABC transporter complex PstSACB involved in phosphate import. Responsible for energy coupling to the transport system. The chain is Phosphate import ATP-binding protein PstB from Salinibacter ruber (strain DSM 13855 / M31).